The sequence spans 82 residues: ATP synthase subunit c, chloroplastic (82 aa).

2 helical membrane-spanning segments follow: residues P3 to G23 and F57 to A77.

It belongs to the ATPase C chain family. F-type ATPases have 2 components, F(1) - the catalytic core - and F(0) - the membrane proton channel. F(1) has five subunits: alpha(3), beta(3), gamma(1), delta(1), epsilon(1). F(0) has four main subunits: a(1), b(1), b'(1) and c(10-14). The alpha and beta chains form an alternating ring which encloses part of the gamma chain. F(1) is attached to F(0) by a central stalk formed by the gamma and epsilon chains, while a peripheral stalk is formed by the delta, b and b' chains.

It localises to the plastid. It is found in the chloroplast thylakoid membrane. In terms of biological role, f(1)F(0) ATP synthase produces ATP from ADP in the presence of a proton or sodium gradient. F-type ATPases consist of two structural domains, F(1) containing the extramembraneous catalytic core and F(0) containing the membrane proton channel, linked together by a central stalk and a peripheral stalk. During catalysis, ATP synthesis in the catalytic domain of F(1) is coupled via a rotary mechanism of the central stalk subunits to proton translocation. Functionally, key component of the F(0) channel; it plays a direct role in translocation across the membrane. A homomeric c-ring of between 10-14 subunits forms the central stalk rotor element with the F(1) delta and epsilon subunits. The polypeptide is ATP synthase subunit c, chloroplastic (Oltmannsiellopsis viridis (Marine flagellate)).